We begin with the raw amino-acid sequence, 90 residues long: Probable Fe(2+)-trafficking protein (90 aa).

The protein belongs to the Fe(2+)-trafficking protein family. In terms of assembly, monomer.

In terms of biological role, could be a mediator in iron transactions between iron acquisition and iron-requiring processes, such as synthesis and/or repair of Fe-S clusters in biosynthetic enzymes. The chain is Probable Fe(2+)-trafficking protein from Pectobacterium carotovorum subsp. carotovorum (strain PC1).